The following is a 629-amino-acid chain: tRNA uridine 5-carboxymethylaminomethyl modification enzyme MnmG (629 aa).

13–18 (GGGHAG) contributes to the FAD binding site. 273 to 287 (GPRYCPSIEDKVMRF) is a binding site for NAD(+).

This sequence belongs to the MnmG family. In terms of assembly, homodimer. Heterotetramer of two MnmE and two MnmG subunits. FAD is required as a cofactor.

It localises to the cytoplasm. NAD-binding protein involved in the addition of a carboxymethylaminomethyl (cmnm) group at the wobble position (U34) of certain tRNAs, forming tRNA-cmnm(5)s(2)U34. The protein is tRNA uridine 5-carboxymethylaminomethyl modification enzyme MnmG of Photorhabdus laumondii subsp. laumondii (strain DSM 15139 / CIP 105565 / TT01) (Photorhabdus luminescens subsp. laumondii).